A 203-amino-acid polypeptide reads, in one-letter code: Twist-related protein 1 (203 aa).

The segment covering 1–18 (MMQDVSSSPVSPADDSLS) has biased composition (low complexity). Positions 1–105 (MMQDVSSSPV…SGGGSPQSYE (105 aa)) are disordered. Over residues 34-43 (RGGRKRRSSR) the composition is skewed to basic residues. Gly residues-rich tracts occupy residues 46-65 (AGGG…GGDE) and 80-100 (GCGG…GGGS). A bHLH domain is found at 109–160 (TQRVMANVRGRQRTQSLNEAFAALRKIIPTLPSDKLSKIQTLKLAARYIDFL). The interval 162–192 (QVLQSDELDSKMASCSYVAHERLSYAFSVWR) is sufficient for transactivation activity.

Efficient DNA binding requires dimerization with another bHLH protein. Homodimer or heterodimer with E proteins such as TCF3. ID1 binds preferentially to TCF3 but does not interact efficiently with TWIST1 so ID1 levels control the amount of TCF3 available to dimerize with TWIST and thus determine the type of dimer formed.

It is found in the nucleus. In terms of biological role, acts as a transcriptional regulator. Inhibits myogenesis by sequestrating E proteins, inhibiting trans-activation by MEF2, and inhibiting DNA-binding by MYOD1 through physical interaction. This interaction probably involves the basic domains of both proteins. Also represses expression of pro-inflammatory cytokines such as TNFA and IL1B. Regulates cranial suture patterning and fusion. Activates transcription as a heterodimer with E proteins. Regulates gene expression differentially, depending on dimer composition. Homodimers induce expression of FGFR2 and POSTN while heterodimers repress FGFR2 and POSTN expression and induce THBS1 expression. Heterodimerization is also required for osteoblast differentiation. Represses the activity of the circadian transcriptional activator: NPAS2-BMAL1 heterodimer. This is Twist-related protein 1 (TWIST1) from Callithrix jacchus (White-tufted-ear marmoset).